Reading from the N-terminus, the 152-residue chain is Small ribosomal subunit protein uS15 (152 aa).

Positions 1 to 11 (MAKMHTKRKGK) are enriched in basic residues. Residues 1 to 22 (MAKMHTKRKGKSSSTRPIRTEP) form a disordered region.

This sequence belongs to the universal ribosomal protein uS15 family. Part of the 30S ribosomal subunit.

This Methanosarcina barkeri (strain Fusaro / DSM 804) protein is Small ribosomal subunit protein uS15.